The sequence spans 478 residues: Transposon Ty1-H Gag polyprotein (478 aa).

Polar residues-rich tracts occupy residues 1 to 10 (MESQQLSNYP), 48 to 60 (TKANSQQTTTPAS), and 127 to 152 (QSQFPQYPSSVGTPLSTPSPESGNTF). Disordered stretches follow at residues 1-84 (MESQ…QNGP), 126-174 (PQSQ…PPPM), and 390-478 (GSRN…PETY). Low complexity predominate over residues 153–165 (TDSSSADSDMTST). Positions 337–439 (NNGIHINNKV…NSKSKTARAH (103 aa)) are RNA-binding. Low complexity predominate over residues 440-456 (NVSTSNNSPSTDNDSIS). Residues 457-466 (KSTTEPIQLN) are compositionally biased toward polar residues. Residues 467 to 478 (NKHDLHLRPETY) are compositionally biased toward basic and acidic residues.

As to quaternary structure, homotrimer.

It is found in the cytoplasm. Functionally, capsid protein (CA) is the structural component of the virus-like particle (VLP), forming the shell that encapsulates the retrotransposons dimeric RNA genome. The particles are assembled from trimer-clustered units and there are holes in the capsid shells that allow for the diffusion of macromolecules. CA also has nucleocapsid-like chaperone activity, promoting primer tRNA(i)-Met annealing to the multipartite primer-binding site (PBS), dimerization of Ty1 RNA and initiation of reverse transcription. In Saccharomyces cerevisiae (strain ATCC 204508 / S288c) (Baker's yeast), this protein is Transposon Ty1-H Gag polyprotein (TY1A-H).